A 208-amino-acid polypeptide reads, in one-letter code: Sec-independent protein translocase protein TatB (208 aa).

A helical membrane pass occupies residues 1–21 (MFDIGVGELTLIAVVALVVLG). Residues 188–208 (DAGTPAASMPSAPAKIQEKQP) are disordered.

Belongs to the TatB family. As to quaternary structure, the Tat system comprises two distinct complexes: a TatABC complex, containing multiple copies of TatA, TatB and TatC subunits, and a separate TatA complex, containing only TatA subunits. Substrates initially bind to the TatABC complex, which probably triggers association of the separate TatA complex to form the active translocon.

The protein resides in the cell inner membrane. Part of the twin-arginine translocation (Tat) system that transports large folded proteins containing a characteristic twin-arginine motif in their signal peptide across membranes. Together with TatC, TatB is part of a receptor directly interacting with Tat signal peptides. TatB may form an oligomeric binding site that transiently accommodates folded Tat precursor proteins before their translocation. The protein is Sec-independent protein translocase protein TatB of Xanthomonas axonopodis pv. citri (strain 306).